The chain runs to 144 residues: UPF0102 protein BURPS1106A_3900 (144 aa).

Residues 1 to 28 (MCHAREASPGTGEPEAAPRDNFPRAAGS) form a disordered region.

This sequence belongs to the UPF0102 family.

The sequence is that of UPF0102 protein BURPS1106A_3900 from Burkholderia pseudomallei (strain 1106a).